A 307-amino-acid polypeptide reads, in one-letter code: Malate dehydrogenase (307 aa).

Residues 8-13 and Asp32 each bind NAD(+); that span reads GAGNVG. Substrate contacts are provided by Arg81 and Arg87. Residues Asn94 and 117 to 119 each bind NAD(+); that span reads VSN. Substrate contacts are provided by Asn119 and Arg150. The active-site Proton acceptor is His174.

Belongs to the LDH/MDH superfamily. MDH type 3 family.

It catalyses the reaction (S)-malate + NAD(+) = oxaloacetate + NADH + H(+). Catalyzes the reversible oxidation of malate to oxaloacetate. This Dehalococcoides mccartyi (strain ATCC BAA-2266 / KCTC 15142 / 195) (Dehalococcoides ethenogenes (strain 195)) protein is Malate dehydrogenase.